We begin with the raw amino-acid sequence, 313 residues long: Ribosomal RNA small subunit methyltransferase H (313 aa).

Residues 35 to 37 (GGH), D55, F81, D103, and Q110 contribute to the S-adenosyl-L-methionine site.

Belongs to the methyltransferase superfamily. RsmH family.

It localises to the cytoplasm. The catalysed reaction is cytidine(1402) in 16S rRNA + S-adenosyl-L-methionine = N(4)-methylcytidine(1402) in 16S rRNA + S-adenosyl-L-homocysteine + H(+). Functionally, specifically methylates the N4 position of cytidine in position 1402 (C1402) of 16S rRNA. The polypeptide is Ribosomal RNA small subunit methyltransferase H (Pseudomonas paraeruginosa (strain DSM 24068 / PA7) (Pseudomonas aeruginosa (strain PA7))).